The primary structure comprises 502 residues: Probable cytochrome P450 554A1 (502 aa).

Residues 3–20 (LLLFIFFLILFYYSVKYY) form a helical membrane-spanning segment. Heme is bound at residue Cys-448.

Belongs to the cytochrome P450 family. Heme is required as a cofactor.

The protein localises to the membrane. This Dictyostelium discoideum (Social amoeba) protein is Probable cytochrome P450 554A1 (cyp554A1).